Reading from the N-terminus, the 41-residue chain is MKIRNSLKSLKDRHRDNRVIRRRGRTYVINKTNRRFKARQG.

The protein belongs to the bacterial ribosomal protein bL36 family.

This Sphingopyxis alaskensis (strain DSM 13593 / LMG 18877 / RB2256) (Sphingomonas alaskensis) protein is Large ribosomal subunit protein bL36.